The primary structure comprises 296 residues: MAEITASMVKELREKTDAPMMECKKALTEAAGDLAKAEEILRVKLGSKASKAASRVTAEGIVATWQSADGKLAALVEVNCETDFVAKNDDFLAFSAAVAELVATRNPADVAAIGALDLGGQTVEQVRTALVGKIGENITIRRFTRIDAQGAVASYIHAGAKIGVLVDLVGGSEALGKDLAMHIAAAKPKALMASEIPAELIDTERRIAIEKAREAGKPEAMLDRIADGTVQKFLKEVTLLGQPFVKDDKLTIEALLKSRNASVASFVLYIVGEGIEKKVSDFAAEVAAQAAAAAQK.

An involved in Mg(2+) ion dislocation from EF-Tu region spans residues 82–85; sequence TDFV.

The protein belongs to the EF-Ts family.

Its subcellular location is the cytoplasm. Its function is as follows. Associates with the EF-Tu.GDP complex and induces the exchange of GDP to GTP. It remains bound to the aminoacyl-tRNA.EF-Tu.GTP complex up to the GTP hydrolysis stage on the ribosome. This Aromatoleum aromaticum (strain DSM 19018 / LMG 30748 / EbN1) (Azoarcus sp. (strain EbN1)) protein is Elongation factor Ts.